The chain runs to 255 residues: tRNA (guanine-N(1)-)-methyltransferase (255 aa).

S-adenosyl-L-methionine-binding positions include Gly117 and 137–142; that span reads IGDYVL.

The protein belongs to the RNA methyltransferase TrmD family. Homodimer.

Its subcellular location is the cytoplasm. It catalyses the reaction guanosine(37) in tRNA + S-adenosyl-L-methionine = N(1)-methylguanosine(37) in tRNA + S-adenosyl-L-homocysteine + H(+). Specifically methylates guanosine-37 in various tRNAs. In Chromobacterium violaceum (strain ATCC 12472 / DSM 30191 / JCM 1249 / CCUG 213 / NBRC 12614 / NCIMB 9131 / NCTC 9757 / MK), this protein is tRNA (guanine-N(1)-)-methyltransferase.